The primary structure comprises 551 residues: Prunin 1 Pru du 6 (551 aa).

Residues 1 to 20 (MAKAFVFSLCLLLVFNGCLA) form the signal peptide. 2 disulfides stabilise this stretch: C32–C65 and C108–C374. The Cupin type-1 1 domain maps to 37 to 312 (LQAREPDNRI…ALNVNEETAR (276 aa)). Disordered stretches follow at residues 111-194 (TFEE…QKTR), 238-293 (NPRK…NVFS), and 329-360 (GNLD…RQQQ). 3 stretches are compositionally biased toward low complexity: residues 114–124 (ESQQSSQQGRQ), 132–148 (QQQQ…QQEQ), and 168–185 (QEQQ…QQFR). R194 is a Ca(2+) binding site. The segment covering 254-275 (QQGQSQPRQQGEQGRPGQHQQP) has biased composition (low complexity). Over residues 282-293 (QEQQGNGNNVFS) the composition is skewed to polar residues. Basic and acidic residues predominate over residues 339-350 (GRQEREHEERQQ). Residues 351–360 (EQLQQERQQQ) are compositionally biased toward low complexity. Positions 367–372 (NGLEET) match the NGXEET; peptidase recognition motif motif. The Cupin type-1 2 domain maps to 380 to 529 (ENIGNPERAD…AYQISREQAR (150 aa)).

It belongs to the 11S seed storage protein (globulins) family. Hexamer of two trimers; each subunit is composed of an acidic and a basic chain derived from a single precursor and linked by a disulfide bond. Post-translationally, proteolytically processed from a single precursor to produce an acidic and a basic chain that are linked by a disulfide bond. In terms of tissue distribution, expressed in seed (at protein level). Expressed in seed.

In terms of biological role, seed storage protein. This Prunus dulcis (Almond) protein is Prunin 1 Pru du 6.